The primary structure comprises 258 residues: Protease HtpX homolog (258 aa).

The next 2 helical transmembrane spans lie at 24–44 (VLLFGLIYAILMVVGSILGLG) and 45–65 (GPLFYALLGFGVIFLQYLISP). His146 is a Zn(2+) binding site. Glu147 is an active-site residue. Position 150 (His150) interacts with Zn(2+). 2 consecutive transmembrane segments (helical) span residues 157–177 (IVMTLVSAVPLICYYIFWSTV) and 186–206 (LVGIAALIAYFIGQLIVLFIS). Residue Glu210 coordinates Zn(2+).

This sequence belongs to the peptidase M48B family. The cofactor is Zn(2+).

The protein resides in the cell membrane. The chain is Protease HtpX homolog from Methanothermobacter thermautotrophicus (strain ATCC 29096 / DSM 1053 / JCM 10044 / NBRC 100330 / Delta H) (Methanobacterium thermoautotrophicum).